We begin with the raw amino-acid sequence, 122 residues long: Basic phospholipase A2 homolog Gln49-PLA2 (122 aa).

7 cysteine pairs are disulfide-bonded: Cys26–Cys115, Cys28–Cys44, Cys43–Cys95, Cys49–Cys122, Cys50–Cys88, Cys57–Cys81, and Cys75–Cys86.

The protein belongs to the phospholipase A2 family. Group II subfamily. Q49 sub-subfamily. Monomer. As to expression, expressed by the venom gland.

The protein localises to the secreted. Its function is as follows. Snake venom phospholipase A2 (PLA2) homolog that shows local myotoxicity, apparent anticoagulant activity, and neurotoxicity. Shows analgesic effect on mice due to a decrease of action potentials and nerve conduction velocity. These effects are caused by inhibition of voltage-gated ion channels (potassium (Kv) and sodium (Nav)). In addition, analgesic effects are antagonized by naloxone, implying the mechanism of action is correlated with opioid receptors (probably indirectly). Does not show detectable PLA2 activity on egg yolk phospholipids. The polypeptide is Basic phospholipase A2 homolog Gln49-PLA2 (Gloydius ussuriensis (Ussuri mamushi)).